The primary structure comprises 508 residues: Photosystem II CP47 reaction center protein (508 aa).

6 helical membrane-spanning segments follow: residues 21–36 (SVHI…WAGS), 101–115 (IVFS…IWHW), 140–156 (GIHL…FGAF), 203–218 (IAAG…FHLS), 237–252 (VLSS…AFVV), and 457–472 (SFAL…HGAR).

This sequence belongs to the PsbB/PsbC family. PsbB subfamily. In terms of assembly, PSII is composed of 1 copy each of membrane proteins PsbA, PsbB, PsbC, PsbD, PsbE, PsbF, PsbH, PsbI, PsbJ, PsbK, PsbL, PsbM, PsbT, PsbX, PsbY, PsbZ, Psb30/Ycf12, at least 3 peripheral proteins of the oxygen-evolving complex and a large number of cofactors. It forms dimeric complexes. It depends on Binds multiple chlorophylls. PSII binds additional chlorophylls, carotenoids and specific lipids. as a cofactor.

It localises to the plastid. Its subcellular location is the chloroplast thylakoid membrane. Functionally, one of the components of the core complex of photosystem II (PSII). It binds chlorophyll and helps catalyze the primary light-induced photochemical processes of PSII. PSII is a light-driven water:plastoquinone oxidoreductase, using light energy to abstract electrons from H(2)O, generating O(2) and a proton gradient subsequently used for ATP formation. The chain is Photosystem II CP47 reaction center protein from Nasturtium officinale (Watercress).